Here is a 386-residue protein sequence, read N- to C-terminus: 3-ketoacyl-CoA thiolase (386 aa).

The active-site Acyl-thioester intermediate is Cys91. Active-site proton acceptor residues include His342 and Cys372.

It belongs to the thiolase-like superfamily. Thiolase family. Heterotetramer of two alpha chains (FadB) and two beta chains (FadA).

It localises to the cytoplasm. The catalysed reaction is an acyl-CoA + acetyl-CoA = a 3-oxoacyl-CoA + CoA. It functions in the pathway lipid metabolism; fatty acid beta-oxidation. In terms of biological role, catalyzes the final step of fatty acid oxidation in which acetyl-CoA is released and the CoA ester of a fatty acid two carbons shorter is formed. This is 3-ketoacyl-CoA thiolase from Pseudoalteromonas atlantica (strain T6c / ATCC BAA-1087).